The sequence spans 250 residues: MEMDGDPYNLPAQGQGNIIITKYEQGHRAGAAVDLGHEQVDVRKYTNNLGIVHEMELPHVSALEVKQRRKESKRTNKWQKMLADWTKYRSTKKLSQRVYKVIPLAVRGRAWSLLLDIDRIKSQNPGKYKVMKEKGKRSSRIIHCIQLDVSHTLQKHMMFIQRFGVKQQELCDILVAYSAYNPEVGYHRDLSRITAILLLCLPEEDAFWALTQLLAGERHSLWYSTAQILPGSRGSYRTRSRCCTSPSQRS.

In terms of domain architecture, Rab-GAP TBC spans Val-101–Ser-250.

Its function is as follows. May act as a GTPase-activating protein for Rab family protein(s). This chain is TBC1 domain family member 26 (TBC1D26), found in Homo sapiens (Human).